Consider the following 177-residue polypeptide: MSRVGKLPITIPEGVKVGLNDLEVKISGPKGELSKTFKGNIAIIMEENKLVVKPLAVNKNARAMWGTARSIICNMITGVKEGFKLKLEINGVGYRAMVKGKYLNLMLAKSHNTKIEIPSNIKIDLPKQNIILLEGIDKEKLGQFASIIIKQRPPEPYKGKGIKFENKFIQRKEGKKN.

The protein belongs to the universal ribosomal protein uL6 family. As to quaternary structure, part of the 50S ribosomal subunit.

In terms of biological role, this protein binds to the 23S rRNA, and is important in its secondary structure. It is located near the subunit interface in the base of the L7/L12 stalk, and near the tRNA binding site of the peptidyltransferase center. The protein is Large ribosomal subunit protein uL6 of Rickettsia prowazekii (strain Madrid E).